Here is a 149-residue protein sequence, read N- to C-terminus: Calmodulin (149 aa).

At Ala2 the chain carries N-acetylalanine. 4 EF-hand domains span residues 8–43 (EQIA…LGQN), 44–79 (PTEA…KMKD), 81–116 (DSEE…LGEK), and 117–149 (LTDE…MTTK). The Ca(2+) site is built by Asp21, Asp23, Asp25, Thr27, Glu32, Asp57, Asp59, Asn61, Thr63, Glu68, Asp94, Asp96, Asn98, and Glu105. Lys116 is modified (N6,N6,N6-trimethyllysine). 5 residues coordinate Ca(2+): Asp130, Asp132, Asp134, Gln136, and Glu141.

It belongs to the calmodulin family. Interacts (in the presence of Ca(2+)) with pde-1, madf-3, rpl-7A, tax-6, efk-1, npp-1, obr-4, sos-1, akt-1, unc-13, tag-196, ugt-48, nmy-2, F27D4.4, ddx-23, efa-6 and R11H6.4.

Its function is as follows. Calmodulin mediates the control of a large number of enzymes, ion channels and other proteins by Ca(2+). Among the enzymes to be stimulated by the calmodulin-Ca(2+) complex are a number of protein kinases and phosphatases. The chain is Calmodulin (cmd-1) from Caenorhabditis elegans.